The chain runs to 173 residues: MQAPPVKEGPRMNEDIRVPRVLLIDQHGEKQGVMPTSAAIEAAEEAGLDLVEIVPNADPPVCKILDYGKFKFQEQKKKNEARKKQKVVELKEIKLRPNIDQHDYEVKARSMHRFFEEGDKVKITLRFRGRELAHPELGMKLLQKVKVDFEEVAKVEYEPRMEGRQMIMILAPR.

Belongs to the IF-3 family. As to quaternary structure, monomer.

The protein localises to the cytoplasm. IF-3 binds to the 30S ribosomal subunit and shifts the equilibrium between 70S ribosomes and their 50S and 30S subunits in favor of the free subunits, thus enhancing the availability of 30S subunits on which protein synthesis initiation begins. The chain is Translation initiation factor IF-3 from Phenylobacterium zucineum (strain HLK1).